Here is a 354-residue protein sequence, read N- to C-terminus: Protein-glutamate methylesterase/protein-glutamine glutaminase of group 3 operon (354 aa).

The Response regulatory domain occupies 3 to 121; it reads RILLATSTVE…MQLEQPAIEK (119 aa). The 183-residue stretch at 158-340 folds into the CheB-type methylesterase domain; that stretch reads PIGIVGIAAS…LESIAENITA (183 aa). Residues Ser-167, His-194, and Asp-287 contribute to the active site.

The protein belongs to the CheB family.

Its subcellular location is the cytoplasm. It catalyses the reaction [protein]-L-glutamate 5-O-methyl ester + H2O = L-glutamyl-[protein] + methanol + H(+). It carries out the reaction L-glutaminyl-[protein] + H2O = L-glutamyl-[protein] + NH4(+). Its function is as follows. Involved in chemotaxis. Part of a chemotaxis signal transduction system that modulates chemotaxis in response to various stimuli. Catalyzes the demethylation of specific methylglutamate residues introduced into the chemoreceptors (methyl-accepting chemotaxis proteins or MCP) by CheR. Also mediates the irreversible deamidation of specific glutamine residues to glutamic acid. The polypeptide is Protein-glutamate methylesterase/protein-glutamine glutaminase of group 3 operon (Rhizobium meliloti (strain 1021) (Ensifer meliloti)).